We begin with the raw amino-acid sequence, 673 residues long: MNRKDSKRKSHQECPVKTGGRGRPRQARRHKTCPSPREISKVMASMALGMLNEGGCSEDELLEKCIQSFDSAGSLRRGDHVLNMVLAMHSWVLPSAHFAARLLTLYQEATGSTQELRRLQICHLVRYWLTQHPETMHQDPQLEEVIGRFWATVEQEGNSVQQSLGDFSSRLSPGGPGPPHPMSSPGLGKKRKVSLLFDHLETGELAEHLTYLEFRSFQAITPQDLRDYVLQGSVRGCPTLEGSVGLSNSVSRWVQVMVLSRPGPAQRAQVLDKFIQVAQKLLQLHNFNTLMAVTGGLCHSAISRLKDSHAHLSPDSTKALLELTELLAAHNNYARYRRTWAGCMDFRLPVLGVHLKDLVALNEAQPDRLPDGRLHLPKLNSLYLRLQELAALQQQHPPGNASEDLLHLLTLSLDLFYTEDEIYELSYAREPRCPKSLPPSPFKAPLVVEWAPGVTPKPDTVTLGRHVEQLVESVFKNYDPDGRGTISQEDFERLSGNFPFACHGLHPPPCQGSGSFSREELTGYLLRASAICSKLGLAFLHTFQEVTFRKPTFCNSCSGFLWGVTKQGYRCRDCGLCCHRHCRDQVKVECKKRPGAKGDASPPEAPVPPTPVPQASCGSEDNLSYTLSLEPETGCHVRHAWTQTESPHPSWEPETVPLPAKASPPTESSKLNS.

Basic residues-rich tracts occupy residues 1-10 and 20-32; these read MNRKDSKRKS and GRGRPRQARRHKT. 2 disordered regions span residues 1–34 and 162–188; these read MNRKDSKRKSHQECPVKTGGRGRPRQARRHKTCP and QSLGDFSSRLSPGGPGPPHPMSSPGLG. In terms of domain architecture, N-terminal Ras-GEF spans 49 to 172; it reads GMLNEGGCSE…SLGDFSSRLS (124 aa). The Ras-GEF domain maps to 201–432; the sequence is ETGELAEHLT…YELSYAREPR (232 aa). Positions 466 to 501 constitute an EF-hand domain; the sequence is HVEQLVESVFKNYDPDGRGTISQEDFERLSGNFPFA. A Phorbol-ester/DAG-type zinc finger spans residues 540-590; the sequence is LHTFQEVTFRKPTFCNSCSGFLWGVTKQGYRCRDCGLCCHRHCRDQVKVEC. Disordered regions lie at residues 593 to 618 and 638 to 673; these read RPGAKGDASPPEAPVPPTPVPQASCG and RHAWTQTESPHPSWEPETVPLPAKASPPTESSKLNS. Residues 603–612 are compositionally biased toward pro residues; it reads PEAPVPPTPV.

It belongs to the RASGRP family.

It localises to the cytoplasm. Its subcellular location is the cell membrane. Functions as a cation- and diacylglycerol (DAG)-regulated nucleotide exchange factor activating Ras through the exchange of bound GDP for GTP. In neutrophils, participates in a phospholipase C-activating N-formyl peptide-activated GPCR (G protein-coupled receptor) signaling pathway by promoting Ras-mediated activation of PIK3CG/PI3Kgamma to promote neutrophil functional responses. In CD117(+) dendritic cells and mast cells, participates in an lipopolysaccharide (LPS)-activated signaling pathway that stimulates the production of interferon-gamma and other pro-inflammatory cytokines by natural killer (NK) cells. May function in mast cell differentiation. Does not appear to be required for the development of B-cells, DC-cells, T-cells, or NK-cells. The polypeptide is RAS guanyl-releasing protein 4 (RASGRP4) (Bos taurus (Bovine)).